Here is a 252-residue protein sequence, read N- to C-terminus: Small ribosomal subunit protein eS1B (252 aa).

A2 is modified (N-acetylalanine; partial). S251 bears the Phosphoserine mark.

Belongs to the eukaryotic ribosomal protein eS1 family. As to quaternary structure, component of the small ribosomal subunit (SSU). Mature yeast ribosomes consist of a small (40S) and a large (60S) subunit. The 40S small subunit contains 1 molecule of ribosomal RNA (18S rRNA) and at least 33 different proteins. The large 60S subunit contains 3 rRNA molecules (25S, 5.8S and 5S rRNA) and at least 46 different proteins. eS1 interacts directly with uS11 and eS26, which form part of the mRNA exit tunnel.

Its subcellular location is the cytoplasm. In terms of biological role, component of the ribosome, a large ribonucleoprotein complex responsible for the synthesis of proteins in the cell. The small ribosomal subunit (SSU) binds messenger RNAs (mRNAs) and translates the encoded message by selecting cognate aminoacyl-transfer RNA (tRNA) molecules. The large subunit (LSU) contains the ribosomal catalytic site termed the peptidyl transferase center (PTC), which catalyzes the formation of peptide bonds, thereby polymerizing the amino acids delivered by tRNAs into a polypeptide chain. The nascent polypeptides leave the ribosome through a tunnel in the LSU and interact with protein factors that function in enzymatic processing, targeting, and the membrane insertion of nascent chains at the exit of the ribosomal tunnel. This is Small ribosomal subunit protein eS1B (rps102) from Schizosaccharomyces pombe (strain 972 / ATCC 24843) (Fission yeast).